The sequence spans 89 residues: Small ribosomal subunit protein uS14 (89 aa).

The protein belongs to the universal ribosomal protein uS14 family. Part of the 30S ribosomal subunit. Contacts proteins S3 and S10.

In terms of biological role, binds 16S rRNA, required for the assembly of 30S particles and may also be responsible for determining the conformation of the 16S rRNA at the A site. The sequence is that of Small ribosomal subunit protein uS14 from Azobacteroides pseudotrichonymphae genomovar. CFP2.